Consider the following 302-residue polypeptide: Citrate lyase subunit beta (302 aa).

Residues arginine 69 and glutamate 132 each contribute to the substrate site. Mg(2+) is bound by residues glutamate 132 and aspartate 159.

This sequence belongs to the HpcH/HpaI aldolase family. Citrate lyase beta subunit subfamily. In terms of assembly, oligomer with a subunit composition of (alpha,beta,gamma)6. Mg(2+) is required as a cofactor.

The protein localises to the cytoplasm. It catalyses the reaction citrate = oxaloacetate + acetate. It carries out the reaction (3S)-citryl-CoA = oxaloacetate + acetyl-CoA. In terms of biological role, represents a citryl-ACP lyase. This chain is Citrate lyase subunit beta (citE), found in Leuconostoc mesenteroides subsp. cremoris.